A 269-amino-acid polypeptide reads, in one-letter code: Hemin import ATP-binding protein HmuV (269 aa).

In terms of domain architecture, ABC transporter spans 5 to 242 (LDAEAASFAI…SLIRRVFDIA (238 aa)). 37–44 (GPNGAGKS) lines the ATP pocket.

The protein belongs to the ABC transporter superfamily. Heme (hemin) importer (TC 3.A.1.14.5) family. As to quaternary structure, the complex is composed of two ATP-binding proteins (HmuV), two transmembrane proteins (HmuU) and a solute-binding protein (HmuT).

The protein resides in the cell inner membrane. Part of the ABC transporter complex HmuTUV involved in hemin import. Responsible for energy coupling to the transport system. The polypeptide is Hemin import ATP-binding protein HmuV (Rhodopseudomonas palustris (strain BisB18)).